A 53-amino-acid polypeptide reads, in one-letter code: UPF0391 membrane protein PC1_0455 (53 aa).

2 helical membrane-spanning segments follow: residues 4–24 (WGII…GGLA) and 30–47 (AAKI…LSLF).

Belongs to the UPF0391 family.

The protein resides in the cell membrane. This is UPF0391 membrane protein PC1_0455 from Pectobacterium carotovorum subsp. carotovorum (strain PC1).